The primary structure comprises 145 residues: Ribonuclease HI (145 aa).

The 142-residue stretch at 1 to 142 (MNQTVYLYTD…ADDLANRGAA (142 aa)) folds into the RNase H type-1 domain. D10, E48, D70, and D134 together coordinate Mg(2+).

Belongs to the RNase H family. As to quaternary structure, monomer. Mg(2+) is required as a cofactor.

Its subcellular location is the cytoplasm. The catalysed reaction is Endonucleolytic cleavage to 5'-phosphomonoester.. Endonuclease that specifically degrades the RNA of RNA-DNA hybrids. The sequence is that of Ribonuclease HI from Neisseria meningitidis serogroup A / serotype 4A (strain DSM 15465 / Z2491).